The primary structure comprises 521 residues: CDP-diacylglycerol--glycerol-3-phosphate 3-phosphatidyltransferase (521 aa).

91–98 (ASLYLGKS) lines the ATP pocket. PLD phosphodiesterase domains follow at residues 177–203 (GLGL…SNDY) and 419–457 (NGWS…TRRA). Catalysis depends on residues His-182, Lys-184, and Asp-189.

It belongs to the CDP-alcohol phosphatidyltransferase class-II family.

It localises to the mitochondrion. The enzyme catalyses a CDP-1,2-diacyl-sn-glycerol + sn-glycerol 3-phosphate = a 1,2-diacyl-sn-glycero-3-phospho-(1'-sn-glycero-3'-phosphate) + CMP + H(+). The protein operates within phospholipid metabolism; phosphatidylglycerol biosynthesis; phosphatidylglycerol from CDP-diacylglycerol: step 1/2. Essential for the viability of mitochondrial petite mutant. Catalyzes the committed step to the synthesis of the acidic phospholipids. The sequence is that of CDP-diacylglycerol--glycerol-3-phosphate 3-phosphatidyltransferase (PGS1) from Saccharomyces cerevisiae (strain ATCC 204508 / S288c) (Baker's yeast).